A 358-amino-acid chain; its full sequence is N-acylethanolamine-hydrolyzing acid amidase (358 aa).

The N-terminal stretch at 1-26 is a signal peptide; the sequence is MQGTGHPVRPVLELLLLLLLLAGVGG. 2 N-linked (GlcNAc...) asparagine glycosylation sites follow: asparagine 39 and asparagine 108. Residue cysteine 127 is the Nucleophile of the active site. N-linked (GlcNAc...) asparagine glycosylation is found at asparagine 310, asparagine 334, and asparagine 356.

It belongs to the acid ceramidase family. Heterodimer of an alpha and a beta subunit, produced by autocatalytic cleavage. In terms of processing, N-glycosylated. Tunicamycin treatment causes a reduction in specific activity against N-palmitoylethanolamine. Autoproteolytic cleavage at pH 4.5 gives rise to the alpha and beta subunit. Cleavage gives rise to a conformation change that activates the enzyme. The same catalytic Cys residue mediates the autoproteolytic cleavage and subsequent hydrolysis of lipid substrates.

It is found in the lysosome. Its subcellular location is the membrane. It carries out the reaction N-hexadecanoylethanolamine + H2O = ethanolamine + hexadecanoate. The enzyme catalyses an N-(long-chain fatty acyl)ethanolamine + H2O = a long-chain fatty acid + ethanolamine. The catalysed reaction is N-dodecanoylethanolamine + H2O = dodecanoate + ethanolamine. It catalyses the reaction N-tetradecanoylethanolamine + H2O = tetradecanoate + ethanolamine. It carries out the reaction an N-acylsphing-4-enine + H2O = sphing-4-enine + a fatty acid. The enzyme catalyses N-hexadecanoylsphing-4-enine + H2O = sphing-4-enine + hexadecanoate. The catalysed reaction is N-dodecanoylsphing-4-enine + H2O = dodecanoate + sphing-4-enine. Its pathway is lipid metabolism; fatty acid metabolism. Its function is as follows. Degrades bioactive fatty acid amides to their corresponding acids, with the following preference: N-palmitoylethanolamine &gt; N-myristoylethanolamine &gt; N-stearoylethanolamine &gt; N-oleoylethanolamine &gt; N-linoleoylethanolamine &gt; N-arachidonoylethanolamine. In Oryctolagus cuniculus (Rabbit), this protein is N-acylethanolamine-hydrolyzing acid amidase.